The following is a 346-amino-acid chain: L-threonine 3-dehydrogenase (346 aa).

Cysteine 42 provides a ligand contact to Zn(2+). Catalysis depends on charge relay system residues threonine 44 and histidine 47. Zn(2+)-binding residues include histidine 67, glutamate 68, cysteine 97, cysteine 100, cysteine 103, and cysteine 111. Residues isoleucine 179, aspartate 199, arginine 204, 266-268 (LSL), and 291-292 (IT) contribute to the NAD(+) site.

It belongs to the zinc-containing alcohol dehydrogenase family. In terms of assembly, homotetramer. Zn(2+) serves as cofactor.

It is found in the cytoplasm. The enzyme catalyses L-threonine + NAD(+) = (2S)-2-amino-3-oxobutanoate + NADH + H(+). It functions in the pathway amino-acid degradation; L-threonine degradation via oxydo-reductase pathway; glycine from L-threonine: step 1/2. Functionally, catalyzes the NAD(+)-dependent oxidation of L-threonine to 2-amino-3-ketobutyrate. The protein is L-threonine 3-dehydrogenase of Bacillus licheniformis (strain ATCC 14580 / DSM 13 / JCM 2505 / CCUG 7422 / NBRC 12200 / NCIMB 9375 / NCTC 10341 / NRRL NRS-1264 / Gibson 46).